The primary structure comprises 340 residues: tRNA N6-adenosine threonylcarbamoyltransferase (340 aa).

Fe cation is bound by residues histidine 111 and histidine 115. Residues 133-137 (VVSGG), aspartate 166, glycine 179, aspartate 183, and asparagine 274 each bind substrate. Aspartate 299 is a Fe cation binding site.

It belongs to the KAE1 / TsaD family. Fe(2+) serves as cofactor.

Its subcellular location is the cytoplasm. It catalyses the reaction L-threonylcarbamoyladenylate + adenosine(37) in tRNA = N(6)-L-threonylcarbamoyladenosine(37) in tRNA + AMP + H(+). Required for the formation of a threonylcarbamoyl group on adenosine at position 37 (t(6)A37) in tRNAs that read codons beginning with adenine. Is involved in the transfer of the threonylcarbamoyl moiety of threonylcarbamoyl-AMP (TC-AMP) to the N6 group of A37, together with TsaE and TsaB. TsaD likely plays a direct catalytic role in this reaction. The protein is tRNA N6-adenosine threonylcarbamoyltransferase of Brachyspira hyodysenteriae (strain ATCC 49526 / WA1).